We begin with the raw amino-acid sequence, 297 residues long: Ribosome production factor 2 homolog (297 aa).

Positions 28 to 232 (KKALFCRGAK…VMRKKLADDA (205 aa)) constitute a Brix domain.

The protein belongs to the RPF2 family.

It localises to the nucleus. Its subcellular location is the nucleolus. The polypeptide is Ribosome production factor 2 homolog (Caenorhabditis elegans).